The sequence spans 1088 residues: RNA-directed RNA polymerase (1088 aa).

Residues 501–687 (LSYGDVTRFL…AKRYIAGGKI (187 aa)) form the RdRp catalytic domain.

It belongs to the reoviridae RNA-directed RNA polymerase family. In terms of assembly, interacts with VP3 (Potential). Interacts with VP2; this interaction activates VP1. Interacts with NSP5; this interaction is probably necessary for the formation of functional virus factories. Interacts with NSP2; this interaction is weak. Requires Mg(2+) as cofactor.

It localises to the virion. It carries out the reaction RNA(n) + a ribonucleoside 5'-triphosphate = RNA(n+1) + diphosphate. In terms of biological role, RNA-directed RNA polymerase that is involved in both transcription and genome replication. Together with VP3 capping enzyme, forms an enzyme complex positioned near the channels situated at each of the five-fold vertices of the core. Following infection, the outermost layer of the virus is lost, leaving a double-layered particle (DLP) made up of the core and VP6 shell. VP1 then catalyzes the transcription of fully conservative plus-strand genomic RNAs that are extruded through the DLP's channels into the cytoplasm where they function as mRNAs for translation of viral proteins. One copy of each of the viral (+)RNAs is also recruited during core assembly, together with newly synthesized polymerase complexes and VP2. The polymerase of these novo-formed particles catalyzes the synthesis of complementary minus-strands leading to dsRNA formation. To do so, the polymerase specifically recognizes and binds 4 bases 5'-UGUG-3' in the conserved 3'-sequence of plus-strand RNA templates. VP2 presumably activates the autoinhibited VP1-RNA complex to coordinate packaging and genome replication. Once dsRNA synthesis is complete, the polymerase switches to the transcriptional mode, thus providing secondary transcription. The polypeptide is RNA-directed RNA polymerase (Rotavirus A (strain RVA/SA11-Patton/G3P[X]) (RV-A)).